A 165-amino-acid chain; its full sequence is Large ribosomal subunit protein uL10 (165 aa).

Belongs to the universal ribosomal protein uL10 family. As to quaternary structure, part of the ribosomal stalk of the 50S ribosomal subunit. The N-terminus interacts with L11 and the large rRNA to form the base of the stalk. The C-terminus forms an elongated spine to which L12 dimers bind in a sequential fashion forming a multimeric L10(L12)X complex.

Functionally, forms part of the ribosomal stalk, playing a central role in the interaction of the ribosome with GTP-bound translation factors. The sequence is that of Large ribosomal subunit protein uL10 from Burkholderia ambifaria (strain MC40-6).